A 114-amino-acid chain; its full sequence is V-type proton ATPase subunit G (114 aa).

S2 is subject to N-acetylserine.

The protein belongs to the V-ATPase G subunit family. V-ATPase is a heteromultimeric enzyme composed of a peripheral catalytic V1 complex (components A to H) attached to an integral membrane V0 proton pore complex (components: a, c, c', c'', d, e, f and VOA1).

The protein resides in the vacuole membrane. In terms of biological role, subunit of the V1 complex of vacuolar(H+)-ATPase (V-ATPase), a multisubunit enzyme composed of a peripheral complex (V1) that hydrolyzes ATP and a membrane integral complex (V0) that translocates protons. V-ATPase is responsible for acidifying and maintaining the pH of intracellular compartments. In Saccharomyces cerevisiae (strain ATCC 204508 / S288c) (Baker's yeast), this protein is V-type proton ATPase subunit G.